The chain runs to 486 residues: Glycogen synthase (486 aa).

K20 contacts ADP-alpha-D-glucose.

It belongs to the glycosyltransferase 1 family. Bacterial/plant glycogen synthase subfamily.

It catalyses the reaction [(1-&gt;4)-alpha-D-glucosyl](n) + ADP-alpha-D-glucose = [(1-&gt;4)-alpha-D-glucosyl](n+1) + ADP + H(+). It participates in glycan biosynthesis; glycogen biosynthesis. Its function is as follows. Synthesizes alpha-1,4-glucan chains using ADP-glucose. This chain is Glycogen synthase, found in Aeromonas salmonicida (strain A449).